The sequence spans 211 residues: MQSAMFLAVQHDCVPMDKSAGNGPKVEEKREKMKRTLLKDWKTRLSYFLQNSSAPGKPKTGKKSKQQTFIKPSPEEAQLWAEAFDELLASKYGLAAFRAFLKSEFCEENIEFWLACEDFKKTKSPQKLSSKARKIYTDFIEKEAPKEINIDFQTKSLIAQNIQEATSGCFTTAQKRVYSLMENNSYPRFLESEFYQDLCKKPQITTEPHAT.

The segment at 32 to 66 (KMKRTLLKDWKTRLSYFLQNSSAPGKPKTGKKSKQ) is necessary for membrane association. Residues 79–116 (LWAEAFDELLASKYGLAAFRAFLKSEFCEENIEFWLAC) form a necessary to inhibit protein synthesis region. Positions 83 to 199 (AFDELLASKY…LESEFYQDLC (117 aa)) constitute an RGS domain.

In terms of assembly, interacts with GNAQ. Does not interact with GNAI1 and GNAI3. Interacts with EIF2B5. Interacts with PRKG1 (isoform alpha). Phosphorylated by protein kinase C. Phosphorylation by PRKG1 leads to activation of RGS2 activity. In terms of tissue distribution, expressed in a wide variety of tissues.

It localises to the cell membrane. Its subcellular location is the cytoplasm. It is found in the nucleus. The protein localises to the nucleolus. Regulates G protein-coupled receptor signaling cascades. Inhibits signal transduction by increasing the GTPase activity of G protein alpha subunits, thereby driving them into their inactive GDP-bound form. It is involved in the negative regulation of the angiotensin-activated signaling pathway. Plays a role in the regulation of blood pressure in response to signaling via G protein-coupled receptors and GNAQ. Plays a role in regulating the constriction and relaxation of vascular smooth muscle. Binds EIF2B5 and blocks its activity, thereby inhibiting the translation of mRNA into protein. The polypeptide is Regulator of G-protein signaling 2 (Rgs2) (Mus musculus (Mouse)).